Consider the following 440-residue polypeptide: Ankyrin repeat and MYND domain-containing protein 2 (440 aa).

3 ANK repeats span residues 45-74 (NGMTPLMHAAYKGKLEMCKLLLRHGADASC), 79-108 (HGYTALMFAALSGNKDITWVMLEAGAETDV), and 159-188 (KLAGPLHKIITTTNLHPVKIVMLVSENPLL). 8 residues coordinate Zn(2+): C320, C323, C332, C335, C341, C345, H353, and C357. The MYND-type zinc-finger motif lies at 320-357 (CTTCGEKGASKRCSVCKMVIYCDQTCQKTHWFAHKKMC). The span at 371-381 (AAKHKRQEEKN) shows a compositional bias: basic and acidic residues. The interval 371 to 440 (AAKHKRQEEK…APTGPQLSEE (70 aa)) is disordered.

In terms of assembly, interacts with the retinal-specific guanylyl cyclase GC1.

The protein localises to the cell projection. It localises to the cilium. Functionally, may be involved in the trafficking of signaling proteins to the cilia. The chain is Ankyrin repeat and MYND domain-containing protein 2 (Ankmy2) from Mus musculus (Mouse).